A 189-amino-acid polypeptide reads, in one-letter code: Elongation factor P (189 aa).

The protein belongs to the elongation factor P family.

Its subcellular location is the cytoplasm. The protein operates within protein biosynthesis; polypeptide chain elongation. Functionally, involved in peptide bond synthesis. Stimulates efficient translation and peptide-bond synthesis on native or reconstituted 70S ribosomes in vitro. Probably functions indirectly by altering the affinity of the ribosome for aminoacyl-tRNA, thus increasing their reactivity as acceptors for peptidyl transferase. The polypeptide is Elongation factor P (Pseudomonas putida (strain ATCC 700007 / DSM 6899 / JCM 31910 / BCRC 17059 / LMG 24140 / F1)).